Consider the following 1111-residue polypeptide: Receptor-type guanylate cyclase gcy-14 (1111 aa).

The N-terminal stretch at 1-14 (MCLFLLLFPYLASG) is a signal peptide. Residues 15 to 473 (QFLQTVKVGL…ECPPDFVKEY (459 aa)) lie on the Extracellular side of the membrane. N-linked (GlcNAc...) asparagine glycans are attached at residues Asn-65, Asn-130, Asn-318, Asn-340, Asn-365, and Asn-379. A helical membrane pass occupies residues 474-494 (LVYTIIAAVIVVLALLAGCAG). The region spanning 482 to 817 (VIVVLALLAG…KSNLMDHVFN (336 aa)) is the Protein kinase domain. ATP is bound by residues 488-496 (LLAGCAGLL) and Lys-545. Residues 495 to 1111 (LLYTMQMKRK…DFNNGNECVS (617 aa)) are Cytoplasmic-facing. A Guanylate cyclase domain is found at 875–1005 (TIFFSDVVQF…DAVNTASRME (131 aa)). Residues 1061–1082 (SAQAPREKTPEPPRRQSVRSIS) form a disordered region. Over residues 1065–1074 (PREKTPEPPR) the composition is skewed to basic and acidic residues.

Belongs to the adenylyl cyclase class-4/guanylyl cyclase family. Homodimer. As to expression, expressed asymmetrically in ASEL sensory neuron.

It localises to the cell membrane. It is found in the cell projection. The protein localises to the cilium. The catalysed reaction is GTP = 3',5'-cyclic GMP + diphosphate. Guanylate cyclase involved in the production of the second messenger cGMP. Regulates chemotaxis responses toward Na(1+) and Li(1+) salt ions and alkaline pH in ASE left (ASEL) sensory neuron. Directly senses environmental alkalinity in ASEL neuron which probably leads to the activation of cGMP-gated cation channel tax2/tax4. In Caenorhabditis elegans, this protein is Receptor-type guanylate cyclase gcy-14.